The following is a 116-amino-acid chain: Large ribosomal subunit protein bL17 (116 aa).

It belongs to the bacterial ribosomal protein bL17 family. In terms of assembly, part of the 50S ribosomal subunit. Contacts protein L32.

This Prochlorococcus marinus (strain MIT 9515) protein is Large ribosomal subunit protein bL17.